Here is a 600-residue protein sequence, read N- to C-terminus: NADH-quinone oxidoreductase subunit C/D (600 aa).

Residues 1-190 form an NADH dehydrogenase I subunit C region; it reads MVNNMTDLTA…SPFELTKAKQ (190 aa). The NADH dehydrogenase I subunit D stretch occupies residues 214 to 600; that stretch reads DFMFLNLGPN…IDFVMSDVDR (387 aa).

The protein in the N-terminal section; belongs to the complex I 30 kDa subunit family. It in the C-terminal section; belongs to the complex I 49 kDa subunit family. As to quaternary structure, NDH-1 is composed of 13 different subunits. Subunits NuoB, CD, E, F, and G constitute the peripheral sector of the complex.

The protein localises to the cell inner membrane. It carries out the reaction a quinone + NADH + 5 H(+)(in) = a quinol + NAD(+) + 4 H(+)(out). Functionally, NDH-1 shuttles electrons from NADH, via FMN and iron-sulfur (Fe-S) centers, to quinones in the respiratory chain. The immediate electron acceptor for the enzyme in this species is believed to be ubiquinone. Couples the redox reaction to proton translocation (for every two electrons transferred, four hydrogen ions are translocated across the cytoplasmic membrane), and thus conserves the redox energy in a proton gradient. The chain is NADH-quinone oxidoreductase subunit C/D from Escherichia coli O157:H7.